Consider the following 436-residue polypeptide: Glutamate-1-semialdehyde 2,1-aminomutase (436 aa).

K272 is subject to N6-(pyridoxal phosphate)lysine.

Belongs to the class-III pyridoxal-phosphate-dependent aminotransferase family. HemL subfamily. Homodimer. It depends on pyridoxal 5'-phosphate as a cofactor.

The protein localises to the cytoplasm. The catalysed reaction is (S)-4-amino-5-oxopentanoate = 5-aminolevulinate. The protein operates within porphyrin-containing compound metabolism; protoporphyrin-IX biosynthesis; 5-aminolevulinate from L-glutamyl-tRNA(Glu): step 2/2. Its pathway is porphyrin-containing compound metabolism; chlorophyll biosynthesis. The chain is Glutamate-1-semialdehyde 2,1-aminomutase from Methylibium petroleiphilum (strain ATCC BAA-1232 / LMG 22953 / PM1).